Consider the following 71-residue polypeptide: Protein PSY3 (71 aa).

The signal sequence occupies residues 1 to 25; sequence MGYSSSSRIGLCLFLFFTFALLSSA. The propeptide occupies 26 to 49; the sequence is RISLSFSENEMTVVPERSLMVSTN. Positions 47–71 are disordered; that stretch reads STNDYSDPTANGRHDPPRGGRGRRR. Sulfotyrosine is present on tyrosine 51. Proline 63 is modified (4-hydroxyproline). Proline 63 is a glycosylation site (O-linked (Ara...) hydroxyproline). Residues 66–71 constitute a propeptide that is removed on maturation; sequence GRGRRR.

The protein belongs to the sulfated-peptide plant hormone family. The sulfation and the glycosylation are required for full activity.

The protein resides in the secreted. Functionally, promotes cellular proliferation and expansion. The protein is Protein PSY3 (PSY3) of Arabidopsis thaliana (Mouse-ear cress).